Reading from the N-terminus, the 740-residue chain is Eukaryotic translation initiation factor 3 subunit B (740 aa).

Residues 1-10 (MAPSFDTLSE) are compositionally biased toward polar residues. Residues 1–20 (MAPSFDTLSEQDLHEEEEEE) form a disordered region. Positions 40 to 126 (TFVVIDGLPV…HTLLVNKLMD (87 aa)) constitute an RRM domain. WD repeat units follow at residues 193-230 (AHWT…KQKQ), 232-289 (PHPF…RSFV), 302-343 (EPKK…LLGK), 455-496 (SLKD…SFFA), 513-556 (IEKK…EKPE), and 571-609 (IEHY…HTFA). Residues 695–721 (DAYGLPEEADDPKLAKDAAATTQEQGE) are disordered.

Belongs to the eIF-3 subunit B family. As to quaternary structure, component of the eukaryotic translation initiation factor 3 (eIF-3) complex.

The protein localises to the cytoplasm. Functionally, RNA-binding component of the eukaryotic translation initiation factor 3 (eIF-3) complex, which is involved in protein synthesis of a specialized repertoire of mRNAs and, together with other initiation factors, stimulates binding of mRNA and methionyl-tRNAi to the 40S ribosome. The eIF-3 complex specifically targets and initiates translation of a subset of mRNAs involved in cell proliferation. In Neosartorya fischeri (strain ATCC 1020 / DSM 3700 / CBS 544.65 / FGSC A1164 / JCM 1740 / NRRL 181 / WB 181) (Aspergillus fischerianus), this protein is Eukaryotic translation initiation factor 3 subunit B (prt1).